The following is a 370-amino-acid chain: Anthranilate phosphoribosyltransferase (370 aa).

5-phospho-alpha-D-ribose 1-diphosphate contacts are provided by residues glycine 82, 85–86 (GD), threonine 90, 92–95 (NVST), 110–118 (KHGNRAATS), and serine 122. Residue glycine 82 coordinates anthranilate. Residue serine 94 participates in Mg(2+) binding. Position 113 (asparagine 113) interacts with anthranilate. Residue arginine 168 coordinates anthranilate. Mg(2+) contacts are provided by aspartate 226 and glutamate 227.

This sequence belongs to the anthranilate phosphoribosyltransferase family. In terms of assembly, homodimer. The cofactor is Mg(2+).

The enzyme catalyses N-(5-phospho-beta-D-ribosyl)anthranilate + diphosphate = 5-phospho-alpha-D-ribose 1-diphosphate + anthranilate. Its pathway is amino-acid biosynthesis; L-tryptophan biosynthesis; L-tryptophan from chorismate: step 2/5. Its function is as follows. Catalyzes the transfer of the phosphoribosyl group of 5-phosphorylribose-1-pyrophosphate (PRPP) to anthranilate to yield N-(5'-phosphoribosyl)-anthranilate (PRA). The polypeptide is Anthranilate phosphoribosyltransferase (Methanosarcina acetivorans (strain ATCC 35395 / DSM 2834 / JCM 12185 / C2A)).